A 94-amino-acid chain; its full sequence is Putative RNA-binding protein RbpD (94 aa).

In terms of domain architecture, RRM spans 2–79; sequence TIYVGNLSYR…RQLRVNKAKP (78 aa). The segment at 73 to 94 is disordered; it reads RVNKAKPREDDRRGSWGKKQDY. A compositionally biased stretch (basic and acidic residues) spans 78-94; that stretch reads KPREDDRRGSWGKKQDY.

The protein is Putative RNA-binding protein RbpD (rbpD) of Nostoc sp. (strain PCC 7120 / SAG 25.82 / UTEX 2576).